We begin with the raw amino-acid sequence, 77 residues long: Sec-independent protein translocase protein TatA (77 aa).

A helical transmembrane segment spans residues 1–21 (MGGISIWQLLIIALIVVLLFG). Basic and acidic residues-rich tracts occupy residues 47 to 56 (EKKALEDKEA) and 65 to 77 (TEKKPEADKKEQA). A disordered region spans residues 47–77 (EKKALEDKEAAAQTTQQATEKKPEADKKEQA).

It belongs to the TatA/E family. The Tat system comprises two distinct complexes: a TatABC complex, containing multiple copies of TatA, TatB and TatC subunits, and a separate TatA complex, containing only TatA subunits. Substrates initially bind to the TatABC complex, which probably triggers association of the separate TatA complex to form the active translocon.

The protein resides in the cell inner membrane. Its function is as follows. Part of the twin-arginine translocation (Tat) system that transports large folded proteins containing a characteristic twin-arginine motif in their signal peptide across membranes. TatA could form the protein-conducting channel of the Tat system. This Shewanella amazonensis (strain ATCC BAA-1098 / SB2B) protein is Sec-independent protein translocase protein TatA.